A 609-amino-acid polypeptide reads, in one-letter code: Protein kinase PVPK-1 (609 aa).

Positions 1-19 (MESSVNGVDSLSEVQNSVS) are enriched in polar residues. 2 disordered regions span residues 1 to 51 (MESS…GHQT) and 80 to 100 (PTKL…EPNG). Residues 229–565 (FRLLKKLGCG…ATEIKQHPFF (337 aa)) enclose the Protein kinase domain. ATP is bound by residues 235–243 (LGCGDIGSV) and Lys258. The Proton acceptor role is filled by Asp354. The tract at residues 429–448 (GKSKKDKKSKPKNDMHNQVT) is disordered.

The protein belongs to the protein kinase superfamily. Ser/Thr protein kinase family.

The enzyme catalyses L-seryl-[protein] + ATP = O-phospho-L-seryl-[protein] + ADP + H(+). It catalyses the reaction L-threonyl-[protein] + ATP = O-phospho-L-threonyl-[protein] + ADP + H(+). The sequence is that of Protein kinase PVPK-1 from Phaseolus vulgaris (Kidney bean).